The chain runs to 441 residues: Serine--tRNA ligase (441 aa).

L-serine is bound at residue 250–252 (TSE). ATP is bound by residues 281 to 283 (RRE) and valine 297. Residue glutamate 304 coordinates L-serine. Position 368 to 371 (368 to 371 (EIVS)) interacts with ATP. Threonine 402 provides a ligand contact to L-serine.

The protein belongs to the class-II aminoacyl-tRNA synthetase family. Type-1 seryl-tRNA synthetase subfamily. As to quaternary structure, homodimer. The tRNA molecule binds across the dimer.

The protein localises to the cytoplasm. The catalysed reaction is tRNA(Ser) + L-serine + ATP = L-seryl-tRNA(Ser) + AMP + diphosphate + H(+). It carries out the reaction tRNA(Sec) + L-serine + ATP = L-seryl-tRNA(Sec) + AMP + diphosphate + H(+). It participates in aminoacyl-tRNA biosynthesis; selenocysteinyl-tRNA(Sec) biosynthesis; L-seryl-tRNA(Sec) from L-serine and tRNA(Sec): step 1/1. In terms of biological role, catalyzes the attachment of serine to tRNA(Ser). Is also able to aminoacylate tRNA(Sec) with serine, to form the misacylated tRNA L-seryl-tRNA(Sec), which will be further converted into selenocysteinyl-tRNA(Sec). The protein is Serine--tRNA ligase of Thermoplasma volcanium (strain ATCC 51530 / DSM 4299 / JCM 9571 / NBRC 15438 / GSS1).